A 689-amino-acid chain; its full sequence is Bifunctional protein GAL10 (689 aa).

The galactowaldenase stretch occupies residues methionine 1–isoleucine 345. Tyrosine 3 to leucine 34 is a binding site for NAD(+). The interval asparagine 346–phenylalanine 689 is mutarotase. The active-site For mutarotase activity is the histidine 534.

It in the N-terminal section; belongs to the NAD(P)-dependent epimerase/dehydratase family. In the C-terminal section; belongs to the aldose epimerase family. NAD(+) is required as a cofactor.

It catalyses the reaction UDP-alpha-D-glucose = UDP-alpha-D-galactose. It carries out the reaction alpha-D-glucose = beta-D-glucose. It participates in carbohydrate metabolism; galactose metabolism. Its pathway is carbohydrate metabolism; hexose metabolism. Its function is as follows. Mutarotase converts alpha-aldose to the beta-anomer. It is active on D-glucose, L-arabinose, D-xylose, D-galactose, maltose and lactose. This chain is Bifunctional protein GAL10 (GAL10), found in Pachysolen tannophilus (Yeast).